We begin with the raw amino-acid sequence, 182 residues long: uncharacterized protein (182 aa).

The N-acetyltransferase domain maps to 55-182; the sequence is VNLHDLEKLC…GVKGMFWYPL (128 aa).

This sequence belongs to the acetyltransferase family. Ycf52 subfamily.

It is found in the plastid. The protein resides in the chloroplast. This is an uncharacterized protein from Gracilaria tenuistipitata var. liui (Red alga).